The primary structure comprises 258 residues: Ferredoxin--NADP reductase (258 aa).

One can recognise an FAD-binding FR-type domain in the interval 2-102 (SNLNVERVLS…RKPTGTLVTS (101 aa)). Asp17 lines the NADP(+) pocket. FAD-binding positions include 51-54 (RAYS), 67-69 (FSI), 74-77 (GPLT), and Thr117. Residues 144 to 145 (VR), 181 to 182 (TR), and Arg190 contribute to the NADP(+) site. 254–258 (AFVEK) contributes to the FAD binding site.

Belongs to the ferredoxin--NADP reductase type 1 family. Monomer. The cofactor is FAD.

The enzyme catalyses 2 reduced [2Fe-2S]-[ferredoxin] + NADP(+) + H(+) = 2 oxidized [2Fe-2S]-[ferredoxin] + NADPH. Functionally, transports electrons between ferredoxin and NADPH. This chain is Ferredoxin--NADP reductase, found in Azotobacter vinelandii.